An 802-amino-acid polypeptide reads, in one-letter code: Phenylalanine--tRNA ligase beta subunit (802 aa).

The tRNA-binding domain maps to 40–155 (SASLKNVVVG…EHVETGVSAI (116 aa)). In terms of domain architecture, B5 spans 409-484 (KAVNKIETSL…RIYGYDEIPV (76 aa)). Mg(2+)-binding residues include Asp-462, Asp-468, Glu-471, and Glu-472. An FDX-ACB domain is found at 709-802 (PRYPEMTRDL…LQAKLHAIIR (94 aa)).

This sequence belongs to the phenylalanyl-tRNA synthetase beta subunit family. Type 1 subfamily. As to quaternary structure, tetramer of two alpha and two beta subunits. The cofactor is Mg(2+).

It localises to the cytoplasm. It carries out the reaction tRNA(Phe) + L-phenylalanine + ATP = L-phenylalanyl-tRNA(Phe) + AMP + diphosphate + H(+). The protein is Phenylalanine--tRNA ligase beta subunit of Listeria innocua serovar 6a (strain ATCC BAA-680 / CLIP 11262).